A 266-amino-acid chain; its full sequence is L-cystine-binding protein TcyJ (266 aa).

The first 29 residues, 1-29, serve as a signal peptide directing secretion; the sequence is MKLAHLGRQALMGVMAVALVAGMSVKSFA.

It belongs to the bacterial solute-binding protein 3 family. The complex is composed of two ATP-binding proteins (TcyN), two transmembrane proteins (TcyL) and a solute-binding protein (TcyJ).

The protein localises to the periplasm. Its function is as follows. Part of the ABC transporter complex TcyJLN involved in L-cystine import. Binds cystine. The sequence is that of L-cystine-binding protein TcyJ from Escherichia coli O6:H1 (strain CFT073 / ATCC 700928 / UPEC).